The following is a 396-amino-acid chain: DNA dC-&gt;dU-editing enzyme APOBEC3 (396 aa).

2 consecutive CMP/dCMP-type deaminase domains span residues 38 to 154 and 205 to 324; these read GRKD…AQVA and EEEF…LCSL. H71 serves as a coordination point for Zn(2+). The active-site Proton donor is E73. Positions 105, 108, 255, 283, and 286 each coordinate Zn(2+).

The protein belongs to the cytidine and deoxycytidylate deaminase family. Homodimer. Requires Zn(2+) as cofactor.

The protein resides in the cytoplasm. It carries out the reaction a 2'-deoxycytidine in single-stranded DNA + H2O + H(+) = a 2'-deoxyuridine in single-stranded DNA + NH4(+). DNA deaminase (cytidine deaminase) which acts as an inhibitor of retrovirus replication and retrotransposon mobility via deaminase-dependent and -independent mechanisms. Selectively targets single-stranded DNA and does not deaminate double-stranded DNA or single- or double-stranded RNA. This Cricetulus longicaudatus (Long-tailed dwarf hamster) protein is DNA dC-&gt;dU-editing enzyme APOBEC3 (APOBEC3).